Here is a 666-residue protein sequence, read N- to C-terminus: Sodium/potassium/calcium exchanger 2 (666 aa).

The Cytoplasmic portion of the chain corresponds to 1 to 38; the sequence is MDLHQSPTARLLQKWCSHESPFGCRRHYNSRKKLKLIR. Residues 39 to 59 traverse the membrane as a helical segment; sequence VIGLVMGLVAVSTVPFSISAF. Over 60–133 the chain is Extracellular; it reads TETDSQSNRG…DIFSLEERRK (74 aa). Positions 63–122 are disordered; the sequence is DSQSNRGEASDMSGPRVAQGHRQRTLLDLNDKIRDYTPQPPASQEDQAENSTEHTQGDYP. N-linked (GlcNAc...) asparagine glycosylation is present at Asn112. A compositionally biased stretch (basic and acidic residues) spans 113–122; it reads STEHTQGDYP. The helical transmembrane segment at 134–154 threads the bilayer; sequence GAIILHVIGMIYMFIALAIVC. Topologically, residues 155 to 179 are cytoplasmic; the sequence is DEFFVPSLTVITEKLGISDDVAGAT. One copy of the Alpha-1 repeat lies at 175-215; sequence VAGATFMAAGGSAPELFTSLIGVFIAHSNVGIGTIVGSAVF. Residues 180-200 form a helical membrane-spanning segment; that stretch reads FMAAGGSAPELFTSLIGVFIA. Residues 201-205 lie on the Extracellular side of the membrane; it reads HSNVG. A helical membrane pass occupies residues 206-226; the sequence is IGTIVGSAVFNILFVIGMCAL. Topologically, residues 227 to 237 are cytoplasmic; it reads FSREILNLTWW. Residues 238 to 258 traverse the membrane as a helical segment; the sequence is PLFRDVSFYIVDLLMLITFFL. The Extracellular segment spans residues 259–260; that stretch reads DN. A helical membrane pass occupies residues 261–281; sequence VIMWWESLLLLTAYFAYVVFM. Over 282–502 the chain is Cytoplasmic; sequence KFNVQVERWV…PDVRKPASRK (221 aa). Positions 311 to 336 are disordered; sequence KSPTAGDKDGPTLPSKPRLQRGGSSA. A phosphoserine mark is found at Ser337 and Ser341. Residues 397–467 form a disordered region; sequence VDENERQNGA…EEDDQPLSLS (71 aa). The span at 416–442 shows a compositional bias: polar residues; that stretch reads PNSTSTEVEMTPSSEASEPVQNGNLSH. A helical membrane pass occupies residues 503-523; sequence FFPITFFGSITWIAVFSYLMV. Residues 524–538 lie on the Extracellular side of the membrane; sequence WWAHQVGETIGISEE. The chain crosses the membrane as a helical span at residues 539–559; it reads IMGLTILAAGTSIPDLITSVI. The stretch at 546–577 is one Alpha-2 repeat; the sequence is AAGTSIPDLITSVIVARKGLGDMAVSSSVGSN. Residues 560 to 574 are Cytoplasmic-facing; that stretch reads VARKGLGDMAVSSSV. A helical membrane pass occupies residues 575-595; it reads GSNIFDITVGLPLPWLLYTII. The Extracellular portion of the chain corresponds to 596 to 607; that stretch reads HRFSPVTVSSNG. Residues 608-628 form a helical membrane-spanning segment; the sequence is LFCAIVLLFIMLLFVILSIAL. The Cytoplasmic segment spans residues 629–635; it reads CKWRMNK. The helical transmembrane segment at 636-656 threads the bilayer; that stretch reads ILGFIMFGLYFVFLVVSVLLE. At 657 to 666 the chain is on the extracellular side; the sequence is DKVLVCPVSI.

It belongs to the Ca(2+):cation antiporter (CaCA) (TC 2.A.19) family. SLC24A subfamily.

The protein resides in the cell membrane. It catalyses the reaction Ca(2+)(out) + K(+)(out) + 4 Na(+)(in) = Ca(2+)(in) + K(+)(in) + 4 Na(+)(out). In terms of biological role, calcium, potassium:sodium antiporter that transports 1 Ca(2+) and 1 K(+) in exchange for 4 Na(+). Required for learming and memory by regulating neuronal Ca(2+), which is essential for the development of synaptic plasticity. This Mus musculus (Mouse) protein is Sodium/potassium/calcium exchanger 2.